The following is a 330-amino-acid chain: L-tryptophan isonitrile synthase AmbI2 (330 aa).

The protein belongs to the isocyanide synthase family.

It carries out the reaction D-ribulose 5-phosphate + L-tryptophan = (2S)-3-(1H-indol-3-yl)-2-isocyanopropanoate + hydroxyacetone + formaldehyde + phosphate + H2O + H(+). In terms of biological role, involved in the biosynthesis of ambiguines, a family of hapalindole-type alkaloids. Responsible for the synthesis of the isonitrile group on tryptophan using ribulose 5-phosphate as the source of the carbon atom. The chain is L-tryptophan isonitrile synthase AmbI2 from Fischerella ambigua (strain UTEX 1903).